We begin with the raw amino-acid sequence, 105 residues long: uncharacterized protein (105 aa).

This sequence belongs to the M.jannaschii MJ0023/MJ0349/MJ1072/MJ1074/MJ1107/MJECL16 family.

This is an uncharacterized protein from Methanocaldococcus jannaschii (strain ATCC 43067 / DSM 2661 / JAL-1 / JCM 10045 / NBRC 100440) (Methanococcus jannaschii).